A 449-amino-acid chain; its full sequence is MGRSRYHNKLKEGIFEAEITALSHDGRGIAKVDGKTTFIPFTLPGEVVKFEYTFTKAKFDEAKVVEYVKKSLNRVNPPCDHFQICGGCSLQHMSTDAQIEHKQQTLINQLKYIGNGVEPENILPPLRTSNTEGYRNKARLGVRYVSKKGKILVGFRERNGRFLADIDKCIVLNPLVGDKITEISSFIETLSIYQHIAQLEIAIDDTRPAMIVRHLEPFTNEDLEKLRSFAQENNYWIYLQSKGPDTIFRLYPQGDVEPKKLSYQPAAGIDIGFEPNDFTQVNNDINKKMIKRAIELLDISENDSIIDLFCGLGNFTLPISQHAKTVIGVEGEPTMVKRAKETADNNNITNVNFYAANLFESFEDKEWFNNFEYNKMLLDPPRAGAQEVCNNIEKFNVKRIVYVSCDTAALARDAGILVNTKGYKLISAGVMDMFPHTMHVESIAVFEKI.

The region spanning 1-66 is the TRAM domain; sequence MGRSRYHNKL…AKFDEAKVVE (66 aa). The [4Fe-4S] cluster site is built by cysteine 79, cysteine 85, cysteine 88, and cysteine 169. S-adenosyl-L-methionine-binding residues include glutamine 280, phenylalanine 309, asparagine 314, glutamate 330, asparagine 357, and aspartate 379. The Nucleophile role is filled by cysteine 405.

Belongs to the class I-like SAM-binding methyltransferase superfamily. RNA M5U methyltransferase family. RlmD subfamily.

It carries out the reaction uridine(1939) in 23S rRNA + S-adenosyl-L-methionine = 5-methyluridine(1939) in 23S rRNA + S-adenosyl-L-homocysteine + H(+). Its function is as follows. Catalyzes the formation of 5-methyl-uridine at position 1939 (m5U1939) in 23S rRNA. This is 23S rRNA (uracil(1939)-C(5))-methyltransferase RlmD from Francisella tularensis subsp. holarctica (strain LVS).